The chain runs to 286 residues: Acetyl-coenzyme A carboxylase carboxyl transferase subunit beta (286 aa).

The CoA carboxyltransferase N-terminal domain occupies 26–286; it reads LWEKCVKCDA…LAKFTRRAAV (261 aa). 4 residues coordinate Zn(2+): C30, C33, C49, and C52. A C4-type zinc finger spans residues 30–52; the sequence is CVKCDAVLYKPELEKNLDVCPKC.

The protein belongs to the AccD/PCCB family. In terms of assembly, acetyl-CoA carboxylase is a heterohexamer composed of biotin carboxyl carrier protein (AccB), biotin carboxylase (AccC) and two subunits each of ACCase subunit alpha (AccA) and ACCase subunit beta (AccD). Requires Zn(2+) as cofactor.

The protein localises to the cytoplasm. The catalysed reaction is N(6)-carboxybiotinyl-L-lysyl-[protein] + acetyl-CoA = N(6)-biotinyl-L-lysyl-[protein] + malonyl-CoA. It participates in lipid metabolism; malonyl-CoA biosynthesis; malonyl-CoA from acetyl-CoA: step 1/1. Component of the acetyl coenzyme A carboxylase (ACC) complex. Biotin carboxylase (BC) catalyzes the carboxylation of biotin on its carrier protein (BCCP) and then the CO(2) group is transferred by the transcarboxylase to acetyl-CoA to form malonyl-CoA. The polypeptide is Acetyl-coenzyme A carboxylase carboxyl transferase subunit beta (Cellvibrio japonicus (strain Ueda107) (Pseudomonas fluorescens subsp. cellulosa)).